The primary structure comprises 539 residues: Chaperonin GroEL (539 aa).

Residues 29 to 32 (TLGP), 86 to 90 (DGTTT), glycine 413, 479 to 481 (DAL), and aspartate 495 each bind ATP.

Belongs to the chaperonin (HSP60) family. As to quaternary structure, forms a cylinder of 14 subunits composed of two heptameric rings stacked back-to-back. Interacts with the co-chaperonin GroES.

The protein resides in the cytoplasm. The catalysed reaction is ATP + H2O + a folded polypeptide = ADP + phosphate + an unfolded polypeptide.. Its function is as follows. Together with its co-chaperonin GroES, plays an essential role in assisting protein folding. The GroEL-GroES system forms a nano-cage that allows encapsulation of the non-native substrate proteins and provides a physical environment optimized to promote and accelerate protein folding. The sequence is that of Chaperonin GroEL from Pseudothermotoga lettingae (strain ATCC BAA-301 / DSM 14385 / NBRC 107922 / TMO) (Thermotoga lettingae).